The sequence spans 376 residues: Queuine tRNA-ribosyltransferase (376 aa).

Residue D92 is the Proton acceptor of the active site. Residues 92 to 96 (DSGGF), D146, Q190, and G217 contribute to the substrate site. Positions 248 to 254 (GVGRPED) are RNA binding. The active-site Nucleophile is D267. The segment at 272-276 (TRNAR) is RNA binding; important for wobble base 34 recognition. C305, C307, C310, and H337 together coordinate Zn(2+).

It belongs to the queuine tRNA-ribosyltransferase family. Homodimer. Within each dimer, one monomer is responsible for RNA recognition and catalysis, while the other monomer binds to the replacement base PreQ1. Requires Zn(2+) as cofactor.

The enzyme catalyses 7-aminomethyl-7-carbaguanine + guanosine(34) in tRNA = 7-aminomethyl-7-carbaguanosine(34) in tRNA + guanine. It functions in the pathway tRNA modification; tRNA-queuosine biosynthesis. Catalyzes the base-exchange of a guanine (G) residue with the queuine precursor 7-aminomethyl-7-deazaguanine (PreQ1) at position 34 (anticodon wobble position) in tRNAs with GU(N) anticodons (tRNA-Asp, -Asn, -His and -Tyr). Catalysis occurs through a double-displacement mechanism. The nucleophile active site attacks the C1' of nucleotide 34 to detach the guanine base from the RNA, forming a covalent enzyme-RNA intermediate. The proton acceptor active site deprotonates the incoming PreQ1, allowing a nucleophilic attack on the C1' of the ribose to form the product. After dissociation, two additional enzymatic reactions on the tRNA convert PreQ1 to queuine (Q), resulting in the hypermodified nucleoside queuosine (7-(((4,5-cis-dihydroxy-2-cyclopenten-1-yl)amino)methyl)-7-deazaguanosine). This chain is Queuine tRNA-ribosyltransferase, found in Stenotrophomonas maltophilia (strain K279a).